The following is a 509-amino-acid chain: Glucose-1-phosphate adenylyltransferase large subunit 4, chloroplastic/amyloplastic (509 aa).

A chloroplast-targeting transit peptide spans 1–36; that stretch reads MATCSWAATTAAAAPPRPPARCRSRVAALRRTAAAS.

It belongs to the bacterial/plant glucose-1-phosphate adenylyltransferase family. As to quaternary structure, heterotetramer composed of two small and two large subunits. As to expression, expressed in leaves and stems.

Its subcellular location is the plastid. It localises to the chloroplast. It catalyses the reaction alpha-D-glucose 1-phosphate + ATP + H(+) = ADP-alpha-D-glucose + diphosphate. It functions in the pathway glycan biosynthesis; starch biosynthesis. Activated by 3'phosphoglycerate, inhibited by orthophosphate. Allosteric regulation. Its function is as follows. Involved in synthesis of starch. Catalyzes the synthesis of ADP-glucose, a molecule that serves as an activated glycosyl donor for alpha-1,4-glucan synthesis. Essential for starch synthesis in leaf chloroplasts. The chain is Glucose-1-phosphate adenylyltransferase large subunit 4, chloroplastic/amyloplastic from Oryza sativa subsp. japonica (Rice).